The primary structure comprises 263 residues: Acyl-[acyl-carrier-protein]--UDP-N-acetylglucosamine O-acyltransferase (263 aa).

It belongs to the transferase hexapeptide repeat family. LpxA subfamily. In terms of assembly, homotrimer.

It is found in the cytoplasm. It carries out the reaction a (3R)-hydroxyacyl-[ACP] + UDP-N-acetyl-alpha-D-glucosamine = a UDP-3-O-[(3R)-3-hydroxyacyl]-N-acetyl-alpha-D-glucosamine + holo-[ACP]. The protein operates within glycolipid biosynthesis; lipid IV(A) biosynthesis; lipid IV(A) from (3R)-3-hydroxytetradecanoyl-[acyl-carrier-protein] and UDP-N-acetyl-alpha-D-glucosamine: step 1/6. Its function is as follows. Involved in the biosynthesis of lipid A, a phosphorylated glycolipid that anchors the lipopolysaccharide to the outer membrane of the cell. The sequence is that of Acyl-[acyl-carrier-protein]--UDP-N-acetylglucosamine O-acyltransferase from Campylobacter jejuni (strain RM1221).